We begin with the raw amino-acid sequence, 360 residues long: CFA/I fimbrial subunit E (360 aa).

It localises to the fimbrium. This chain is CFA/I fimbrial subunit E (cfaE), found in Escherichia coli.